The following is an 842-amino-acid chain: Glycogen phosphorylase, muscle form (842 aa).

Residue Ser-2 is modified to N-acetylserine. Residue Ser-15 is modified to Phosphoserine; by PHK; in form phosphorylase A. Residues Asp-43 and Tyr-76 each coordinate AMP. Residues Tyr-204 and Tyr-227 each carry the phosphotyrosine modification. 310–319 (RRFKSSKFGS) provides a ligand contact to AMP. A Phosphoserine modification is found at Ser-430. Residue Tyr-473 is modified to Phosphotyrosine. Residue Ser-514 is modified to Phosphoserine. Position 681 is an N6-(pyridoxal phosphate)lysine (Lys-681). Phosphoserine is present on residues Ser-747 and Ser-748.

It belongs to the glycogen phosphorylase family. As to quaternary structure, homodimer. Homotetramer; to form the enzymatically active phosphorylase A. Pyridoxal 5'-phosphate is required as a cofactor. Phosphorylation of Ser-15 converts phosphorylase B (unphosphorylated) to phosphorylase A.

It catalyses the reaction [(1-&gt;4)-alpha-D-glucosyl](n) + phosphate = [(1-&gt;4)-alpha-D-glucosyl](n-1) + alpha-D-glucose 1-phosphate. With respect to regulation, allosterically regulated through the non-covalent binding of metabolites, being activated by AMP and inhibited by ATP, ADP, and glucose-6-phosphate. The activity is also controlled by post-translational modifications including phosphorylation. Its function is as follows. Allosteric enzyme that catalyzes the rate-limiting step in glycogen catabolism, the phosphorolytic cleavage of glycogen to produce glucose-1-phosphate, and plays a central role in maintaining cellular and organismal glucose homeostasis. The protein is Glycogen phosphorylase, muscle form of Mus musculus (Mouse).